Reading from the N-terminus, the 258-residue chain is Tryptophan synthase alpha chain (258 aa).

Catalysis depends on proton acceptor residues E47 and D58.

The protein belongs to the TrpA family. As to quaternary structure, tetramer of two alpha and two beta chains.

The catalysed reaction is (1S,2R)-1-C-(indol-3-yl)glycerol 3-phosphate + L-serine = D-glyceraldehyde 3-phosphate + L-tryptophan + H2O. It participates in amino-acid biosynthesis; L-tryptophan biosynthesis; L-tryptophan from chorismate: step 5/5. The alpha subunit is responsible for the aldol cleavage of indoleglycerol phosphate to indole and glyceraldehyde 3-phosphate. The sequence is that of Tryptophan synthase alpha chain from Bacillus cereus (strain ZK / E33L).